Here is a 175-residue protein sequence, read N- to C-terminus: 3-hydroxyanthranilate 3,4-dioxygenase (175 aa).

Arg-45 serves as a coordination point for O2. Residues His-49, Glu-55, and His-93 each coordinate Fe cation. Glu-55 is a binding site for substrate. Positions 97 and 107 each coordinate substrate. Cys-122, Cys-125, Cys-159, and Cys-162 together coordinate a divalent metal cation.

It belongs to the 3-HAO family. It depends on Fe(2+) as a cofactor.

Its subcellular location is the cytoplasm. It carries out the reaction 3-hydroxyanthranilate + O2 = (2Z,4Z)-2-amino-3-carboxymuconate 6-semialdehyde. It functions in the pathway cofactor biosynthesis; NAD(+) biosynthesis; quinolinate from L-kynurenine: step 3/3. In terms of biological role, catalyzes the oxidative ring opening of 3-hydroxyanthranilate to 2-amino-3-carboxymuconate semialdehyde, which spontaneously cyclizes to quinolinate. The protein is 3-hydroxyanthranilate 3,4-dioxygenase of Lodderomyces elongisporus (strain ATCC 11503 / CBS 2605 / JCM 1781 / NBRC 1676 / NRRL YB-4239) (Yeast).